Here is a 238-residue protein sequence, read N- to C-terminus: Uridylate kinase (238 aa).

ATP is bound at residue Lys12 to Gly15. Position 54 (Gly54) interacts with UMP. ATP is bound by residues Gly55 and Arg59. UMP-binding positions include Asp74 and Thr135–Thr142. The ATP site is built by Thr162, Asn163, Tyr168, and Asp171.

The protein belongs to the UMP kinase family. In terms of assembly, homohexamer.

The protein resides in the cytoplasm. The enzyme catalyses UMP + ATP = UDP + ADP. The protein operates within pyrimidine metabolism; CTP biosynthesis via de novo pathway; UDP from UMP (UMPK route): step 1/1. With respect to regulation, inhibited by UTP. Catalyzes the reversible phosphorylation of UMP to UDP. This chain is Uridylate kinase, found in Bradyrhizobium sp. (strain ORS 278).